The primary structure comprises 314 residues: Beta-ketoacyl-[acyl-carrier-protein] synthase III (314 aa).

Catalysis depends on residues cysteine 112 and histidine 241. An ACP-binding region spans residues 242 to 246; that stretch reads QANIR. Asparagine 271 is an active-site residue.

This sequence belongs to the thiolase-like superfamily. FabH family. Homodimer.

The protein localises to the cytoplasm. It carries out the reaction malonyl-[ACP] + acetyl-CoA + H(+) = 3-oxobutanoyl-[ACP] + CO2 + CoA. It participates in lipid metabolism; fatty acid biosynthesis. Its function is as follows. Catalyzes the condensation reaction of fatty acid synthesis by the addition to an acyl acceptor of two carbons from malonyl-ACP. Catalyzes the first condensation reaction which initiates fatty acid synthesis and may therefore play a role in governing the total rate of fatty acid production. Possesses both acetoacetyl-ACP synthase and acetyl transacylase activities. Its substrate specificity determines the biosynthesis of branched-chain and/or straight-chain of fatty acids. The sequence is that of Beta-ketoacyl-[acyl-carrier-protein] synthase III from Vesicomyosocius okutanii subsp. Calyptogena okutanii (strain HA).